A 302-amino-acid polypeptide reads, in one-letter code: Thioredoxin-like protein CDSP32, chloroplastic (302 aa).

The transit peptide at methionine 1–lysine 56 directs the protein to the chloroplast. Residues histidine 163 to valine 298 enclose the Thioredoxin domain. Residues cysteine 219 and cysteine 222 each act as nucleophile in the active site. Residues cysteine 219 and cysteine 222 are joined by a disulfide bond.

It belongs to the thioredoxin family. Interacts with the plastidial peroxiredoxin BAS1.

Its subcellular location is the plastid. It localises to the chloroplast stroma. Probable thiol-disulfide oxidoreductase involved in resistance to oxidative stress. May participate in the reduction of alkyl hydroperoxides derived from oxidative stress by acting as a physiological electron donor to the BAS1 peroxiredoxin. May regenerate methionine sulfoxide reductase B1 (MSRB1) activity through sulfenic acid reduction. The sequence is that of Thioredoxin-like protein CDSP32, chloroplastic (CDSP32) from Arabidopsis thaliana (Mouse-ear cress).